The sequence spans 200 residues: LexA repressor (200 aa).

A DNA-binding region (H-T-H motif) is located at residues 28–48 (RAEIAEILGFKSANAAEEHLK). Active-site for autocatalytic cleavage activity residues include Ser118 and Lys155.

The protein belongs to the peptidase S24 family. As to quaternary structure, homodimer.

It carries out the reaction Hydrolysis of Ala-|-Gly bond in repressor LexA.. Functionally, represses a number of genes involved in the response to DNA damage (SOS response), including recA and lexA. In the presence of single-stranded DNA, RecA interacts with LexA causing an autocatalytic cleavage which disrupts the DNA-binding part of LexA, leading to derepression of the SOS regulon and eventually DNA repair. The sequence is that of LexA repressor from Teredinibacter turnerae (strain ATCC 39867 / T7901).